Here is a 729-residue protein sequence, read N- to C-terminus: Fibroblast growth factor receptor 2 (729 aa).

The first 21 residues, 1–21 (MFSWSYLMGLVMVATATLSLA), serve as a signal peptide directing secretion. Residues 22 to 285 (RPSYNIAEDT…ELDSSSEYTE (264 aa)) lie on the Extracellular side of the membrane. Residues 29–62 (EDTTLEPEDANSSGDDEDDNDGSEDFTNDNNHMR) are disordered. Positions 31 to 55 (TTLEPEDANSSGDDEDDNDGSEDFT) are enriched in acidic residues. Asn-39 carries N-linked (GlcNAc...) asparagine glycosylation. Ig-like C2-type domains lie at 64–157 (PYWT…YHLD) and 166–268 (PILQ…AWLT). The heparin-binding stretch occupies residues 71–88 (KLEKKLHAVPAANTVKFR). A disulfide bridge links Cys-89 with Cys-141. 7 N-linked (GlcNAc...) asparagine glycosylation sites follow: Asn-138, Asn-151, Asn-175, Asn-207, Asn-228, Asn-241, and Asn-256. Cys-188 and Cys-252 are disulfide-bonded. A helical membrane pass occupies residues 286-306 (IAIYCVGGFLITCMIGTIMVC). At 307-729 (HMKGRGKKSD…SQHTNGTIKT (423 aa)) the chain is on the cytoplasmic side. Tyr-374 carries the post-translational modification Phosphotyrosine; by autocatalysis. The Protein kinase domain occupies 389–678 (LTLGKPLGEG…LTQTTNEEYL (290 aa)). Residues 395-403 (LGEGCFGQV), Lys-425, 473-475 (EYA), and Asn-479 each bind ATP. Tyr-494 bears the Phosphotyrosine; by autocatalysis mark. Catalysis depends on Asp-534, which acts as the Proton acceptor. A phosphotyrosine; by autocatalysis mark is found at Tyr-564, Tyr-565, and Tyr-677. The tract at residues 683–729 (PLEQYSPSYPDTRSSCSSGDDSVFSPDAMPYDPCLPKSQHTNGTIKT) is disordered. Residues 693–707 (DTRSSCSSGDDSVFS) show a composition bias toward low complexity. Over residues 720-729 (SQHTNGTIKT) the composition is skewed to polar residues.

Belongs to the protein kinase superfamily. Tyr protein kinase family. Fibroblast growth factor receptor subfamily. As to quaternary structure, monomer. Homodimer after ligand binding. Post-translationally, autophosphorylated. Binding of FGF family members together with heparan sulfate proteoglycan or heparin promotes receptor dimerization and autophosphorylation on tyrosine residues. Autophosphorylation occurs in trans between the two FGFR molecules present in the dimer. N-glycosylated in the endoplasmic reticulum. The N-glycan chains undergo further maturation to an Endo H-resistant form in the Golgi apparatus. In terms of processing, ubiquitinated. FGFR2 is rapidly ubiquitinated after autophosphorylation, leading to internalization and degradation. Subject to degradation both in lysosomes and by the proteasome.

It is found in the cell membrane. The protein resides in the golgi apparatus. The protein localises to the cytoplasmic vesicle. The catalysed reaction is L-tyrosyl-[protein] + ATP = O-phospho-L-tyrosyl-[protein] + ADP + H(+). Present in an inactive conformation in the absence of bound ligand. Ligand binding leads to dimerization and activation by autophosphorylation on tyrosine residues. In terms of biological role, tyrosine-protein kinase that acts as a cell-surface receptor for fibroblast growth factors and plays an essential role in the regulation of cell proliferation, differentiation, migration and apoptosis, and in the regulation of embryonic development. Required for normal embryonic patterning, limb bud development, lung morphogenesis, osteogenesis and skin development. Plays an essential role in the regulation of osteoblast differentiation, proliferation and apoptosis, and is required for normal skeleton development. Promotes cell proliferation in keratinocytes and immature osteoblasts, but promotes apoptosis in differentiated osteoblasts. Phosphorylates PLCG1, FRS2 and PAK4. Ligand binding leads to the activation of several signaling cascades. Activation of PLCG1 leads to the production of the cellular signaling molecules diacylglycerol and inositol 1,4,5-trisphosphate. Phosphorylation of FRS2 triggers recruitment of GRB2, GAB1, PIK3R1 and SOS1, and mediates activation of RAS, MAPK1/ERK2, MAPK3/ERK1 and the MAP kinase signaling pathway, as well as of the AKT1 signaling pathway. FGFR2 signaling is down-regulated by ubiquitination, internalization and degradation. Mutations that lead to constitutive kinase activation or impair normal FGFR2 maturation, internalization and degradation lead to aberrant signaling. Over-expressed FGFR2 promotes activation of STAT1. In Notophthalmus viridescens (Eastern newt), this protein is Fibroblast growth factor receptor 2 (FGFR2).